Reading from the N-terminus, the 594-residue chain is MRDDKTKKSKLSWSKKMVRKWFNIKSKTEKFQADVSLPQGVEVEHRNSFSEREPCTIKKSKTEKLNKNWEQQARQRKMNYENPRIIDVQNHSIFVATWNVAGRSPPEDLNLDEWLHSSAPADIYVLGFQEIVPLNAGNVLGAEDNGPAKKWHSLIRKTLNNLPGASSACHTPSPIPVPIAEIDADFSGSSRQKNETFFNRRSFQTPSVWSMEENDPSISQPRLDRRFSVCDRVFFSHRPSDFDPSFRCGHRPSDYSRRPSDYSRPSDYYSRPSNYSRPSDVSRWGSSDDDNGPGDSPSTFLNSPGSFLGSAANENGYRTPWNSSQYCLVASKQMVGIFLTIWVKSELREHVKNMKVSCVGRGLMGYLGNKGSISISMLLHQTSFCFVCTHLTSGQKEGDELRRNSDVMEILKKTRFPRVQSSADEKSPENILQHDRVIWLGDLNYRIALSYRSAKALVEMQNWRALLENDQLRIEQKRGHVFKGWNEGKIYFPPTYKYSNNSDRYAGGDLHPKEKRRTPAWCDRILWHGEGLHQLSYVRGESRFSDHRPVYGIFSAEVESNHKRSKRTNSHSTARVEAEELLPYARGYTELTFF.

The tract at residues 246–300 (FRCGHRPSDYSRRPSDYSRPSDYYSRPSNYSRPSDVSRWGSSDDDNGPGDSPSTF) is disordered. Residues 251 to 261 (RPSDYSRRPSD) show a composition bias toward basic and acidic residues. Over residues 262 to 279 (YSRPSDYYSRPSNYSRPS) the composition is skewed to low complexity. Catalytic stretches follow at residues 435–450 (DRVI…IALS) and 515–530 (KRRT…WHGE).

This sequence belongs to the inositol polyphosphate 5-phosphatase family. Broadly expressed in emerging organs. Mostly localized in procambium of growing organs. Restricted to vascular differentiating cells of young organs.

It localises to the nucleus. Its subcellular location is the cell membrane. The enzyme catalyses a 1,2-diacyl-sn-glycero-3-phospho-(1D-myo-inositol-4,5-bisphosphate) + H2O = a 1,2-diacyl-sn-glycero-3-phospho-(1D-myo-inositol 4-phosphate) + phosphate. It carries out the reaction a 1,2-diacyl-sn-glycero-3-phospho-(1D-myo-inositol-3,4,5-trisphosphate) + H2O = a 1,2-diacyl-sn-glycero-3-phospho-(1D-myo-inositol-3,4-bisphosphate) + phosphate. In terms of biological role, has phosphatase activity toward PtdIns(4,5)P2 and at a lower extent toward PtdIns(3,4,5)P3 but not toward Ins(1,4,5)P3. Acts redundantly with CVP2 for maintaining vascular continuity. Regulates phosphoinositide-dependent VAN3 localization. Functions in salt stress response by regulating reactive oxygen species (ROS) production and stress-responsive genes expression. This chain is Type IV inositol polyphosphate 5-phosphatase 7, found in Arabidopsis thaliana (Mouse-ear cress).